The chain runs to 1516 residues: AP-4 complex accessory subunit RUSC2 (1516 aa).

Disordered stretches follow at residues 33–105 (AGGG…PFLL), 202–224 (LDEC…SGFS), 229–248 (WKLS…SGDQ), 331–351 (SKMS…GYGC), 404–445 (LSSQ…PSEY), and 478–511 (GQVY…PVRL). The segment covering 66–81 (LFSSLHSTPGGTARSI) has biased composition (polar residues). A compositionally biased stretch (basic and acidic residues) spans 82–92 (DSTKSRSRDGR). A compositionally biased stretch (gly residues) spans 206-217 (GGPGGSGSGGGA). Residues 333 to 344 (MSYESHHPESGG) are compositionally biased toward basic and acidic residues. A compositionally biased stretch (low complexity) spans 405 to 420 (SSQSSPSPAGSSITSC). Residues 428-440 (SPPPGPGPDPGPS) are compositionally biased toward pro residues. The span at 480 to 493 (VYTNTSPPNLSTGR) shows a compositional bias: polar residues. S536, S543, and S559 each carry phosphoserine. Disordered regions lie at residues 550–588 (GRKK…APLD), 646–688 (LMDP…KEQR), 727–836 (RTQQ…PQKE), and 868–889 (ESLA…ANHL). The segment covering 567 to 579 (GDSSQEFSPIQEA) has biased composition (polar residues). S656 is modified (phosphoserine). Low complexity predominate over residues 729 to 746 (QQPAPLAAPAAQVSVPAP). Phosphoserine is present on S781. The span at 791–801 (PSTDSSASTSC) shows a compositional bias: low complexity. Residues 1031–1175 (NVGHLVLKYL…LPFSLDLLFQ (145 aa)) enclose the RUN domain. Disordered regions lie at residues 1210 to 1261 (RARG…GRAR), 1286 to 1408 (IEGS…LPSD), and 1422 to 1449 (QTVG…SSPP). Over residues 1219–1230 (DVDRAAQGERVK) the composition is skewed to basic and acidic residues. Acidic residues predominate over residues 1237-1251 (GGEEEEEEEETEEVA). The segment covering 1355–1364 (ELRRSREREG) has biased composition (basic and acidic residues). S1368 and S1380 each carry phosphoserine. Over residues 1426 to 1437 (SRREPEPKESLQ) the composition is skewed to basic and acidic residues. The 60-residue stretch at 1447–1506 (SPPCEVQALCHHLATGPGQLSFHKGDILRVLGRAGGDWLRCSRGPDSGLVPLAYVTLTPT) folds into the SH3 domain.

As to quaternary structure, associated component of the adapter-like complex 4 (AP-4). Interacts with active RAB1A and RAB1B, and with GOLGA2. Interacts (via RUN domain) with RAB35 (GTP-bound form); the interaction recruits RUSC2 to the plasma membrane. Widely expressed, with highest levels in brain and testis.

The protein localises to the cytoplasm. It is found in the cytosol. It localises to the cell membrane. In terms of biological role, associates with the adapter-like complex 4 (AP-4) and may therefore play a role in vesicular trafficking of proteins at the trans-Golgi network. This Homo sapiens (Human) protein is AP-4 complex accessory subunit RUSC2.